The following is a 224-amino-acid chain: Thymidine kinase (224 aa).

ATP-binding positions include 19 to 26 (GPMFAGKT) and 93 to 96 (DEVQ). Glu94 (proton acceptor) is an active-site residue. Zn(2+) contacts are provided by Cys150, Cys153, Cys188, and His191.

Belongs to the thymidine kinase family. As to quaternary structure, homotetramer.

Its subcellular location is the cytoplasm. It carries out the reaction thymidine + ATP = dTMP + ADP + H(+). The sequence is that of Thymidine kinase from Mycoplasmoides gallisepticum (strain R(low / passage 15 / clone 2)) (Mycoplasma gallisepticum).